The sequence spans 450 residues: Phosphoglucosamine mutase (450 aa).

Ser102 functions as the Phosphoserine intermediate in the catalytic mechanism. Positions 102, 243, 245, and 247 each coordinate Mg(2+). Ser102 is subject to Phosphoserine.

Belongs to the phosphohexose mutase family. Mg(2+) serves as cofactor. In terms of processing, activated by phosphorylation.

It carries out the reaction alpha-D-glucosamine 1-phosphate = D-glucosamine 6-phosphate. Functionally, catalyzes the conversion of glucosamine-6-phosphate to glucosamine-1-phosphate. This Allorhizobium ampelinum (strain ATCC BAA-846 / DSM 112012 / S4) (Agrobacterium vitis (strain S4)) protein is Phosphoglucosamine mutase.